We begin with the raw amino-acid sequence, 152 residues long: Neuromedin-S (152 aa).

The N-terminal stretch at 1-26 is a signal peptide; sequence MKHPFPQFPPILVIYCFCMLQIPSSG. 3 propeptides span residues 27 to 69, 70 to 105, and 106 to 108; these read ASPP…VYKR, FLFH…PSRR, and MKR. Asparagine 144 carries the asparagine amide modification. The propeptide occupies 147 to 152; the sequence is YTDKVQ.

Belongs to the NmU family. As to expression, expressed in the CNS, spleen and testis. Specifically expressed in the suprachiasmatic nuclei (SCN) of the hypothalamus.

Its subcellular location is the secreted. Implicated in the regulation of circadian rhythms through autocrine and/or paracrine actions. Stimulates the contraction of rectum and elevation of blood pressure. The polypeptide is Neuromedin-S (Nms) (Rattus norvegicus (Rat)).